We begin with the raw amino-acid sequence, 516 residues long: Probable serine/threonine-protein kinase ECU02_0550 (516 aa).

The Protein kinase domain maps to 4 to 230 (YKLRQVIGEG…ASEALMHRSF (227 aa)). ATP is bound by residues 10–18 (IGEGASSTV) and lysine 32. The active-site Proton acceptor is aspartate 120.

It belongs to the protein kinase superfamily. CAMK Ser/Thr protein kinase family.

It carries out the reaction L-seryl-[protein] + ATP = O-phospho-L-seryl-[protein] + ADP + H(+). The enzyme catalyses L-threonyl-[protein] + ATP = O-phospho-L-threonyl-[protein] + ADP + H(+). The polypeptide is Probable serine/threonine-protein kinase ECU02_0550 (Encephalitozoon cuniculi (strain GB-M1) (Microsporidian parasite)).